The following is a 515-amino-acid chain: 2,3-bisphosphoglycerate-independent phosphoglycerate mutase (515 aa).

Asp-14 and Ser-64 together coordinate Mn(2+). Ser-64 (phosphoserine intermediate) is an active-site residue. Substrate-binding positions include His-125, 155-156 (RD), Arg-187, Arg-193, 263-266 (RADR), and Lys-337. Residues Asp-404, His-408, Asp-445, His-446, and His-464 each contribute to the Mn(2+) site.

This sequence belongs to the BPG-independent phosphoglycerate mutase family. As to quaternary structure, monomer. Mn(2+) serves as cofactor.

It catalyses the reaction (2R)-2-phosphoglycerate = (2R)-3-phosphoglycerate. It functions in the pathway carbohydrate degradation; glycolysis; pyruvate from D-glyceraldehyde 3-phosphate: step 3/5. Its function is as follows. Catalyzes the interconversion of 2-phosphoglycerate and 3-phosphoglycerate. The protein is 2,3-bisphosphoglycerate-independent phosphoglycerate mutase of Yersinia pseudotuberculosis serotype I (strain IP32953).